Here is an 826-residue protein sequence, read N- to C-terminus: Ubiquitin carboxyl-terminal hydrolase 16 (826 aa).

The UBP-type zinc-finger motif lies at 22–142 (PMCRHIRKGL…QVVDYVRKQA (121 aa)). Zn(2+)-binding residues include C24, H26, C48, C51, C74, C77, C82, H90, H94, H103, C116, and C119. K140 participates in a covalent cross-link: Glycyl lysine isopeptide (Lys-Gly) (interchain with G-Cter in SUMO2). The disordered stretch occupies residues 146–190 (TPKPAEKDNGNIELENKKLEKESKNEQEREKKENMAKENPPMNSP). A compositionally biased stretch (basic and acidic residues) spans 149-181 (PAEKDNGNIELENKKLEKESKNEQEREKKENMA). The residue at position 189 (S189) is a Phosphoserine. The 630-residue stretch at 196 to 825 (KGLSNLGNTC…QAYLLFYERI (630 aa)) folds into the USP domain. C205 acts as the Nucleophile in catalysis. Residues 394-408 (SGKKSVNDKNLKKTM) show a composition bias toward basic and acidic residues. Residues 394 to 460 (SGKKSVNDKN…AKNQRRQQKI (67 aa)) are disordered. Over residues 409–420 (EDEDQDSEEEKD) the composition is skewed to acidic residues. At S415 the chain carries Phosphoserine. Over residues 421-430 (NDSYIKERSD) the composition is skewed to basic and acidic residues. Positions 438–458 (HLQKKAKKQAKKQAKNQRRQQ) are enriched in basic residues. Position 552 is a phosphoserine (S552). T557 carries the phosphothreonine modification. The active-site Proton acceptor is H761.

The protein belongs to the peptidase C19 family. USP16 subfamily. Homotetramer. Associates with late pre-40S ribosomes. Interacts with CEP78; promoting deubiquitination of tektins. Post-translationally, phosphorylated at the onset of mitosis and dephosphorylated during the metaphase/anaphase transition. Phosphorylation by AURKB enhances the deubiquitinase activity.

It localises to the nucleus. It carries out the reaction Thiol-dependent hydrolysis of ester, thioester, amide, peptide and isopeptide bonds formed by the C-terminal Gly of ubiquitin (a 76-residue protein attached to proteins as an intracellular targeting signal).. In terms of biological role, specifically deubiquitinates 'Lys-120' of histone H2A (H2AK119Ub), a specific tag for epigenetic transcriptional repression, thereby acting as a coactivator. Deubiquitination of histone H2A is a prerequisite for subsequent phosphorylation at 'Ser-11' of histone H3 (H3S10ph), and is required for chromosome segregation when cells enter into mitosis. In resting B- and T-lymphocytes, phosphorylation by AURKB leads to enhance its activity, thereby maintaining transcription in resting lymphocytes. Regulates Hox gene expression via histone H2A deubiquitination. Prefers nucleosomal substrates. Does not deubiquitinate histone H2B. Also deubiquitinates non-histone proteins, such as ribosomal protein RPS27A: deubiquitination of monoubiquitinated RPS27A promotes maturation of the 40S ribosomal subunit. Also mediates deubiquitination of tektin proteins (TEKT1, TEKT2, TEK3, TEKT4 and TEKT5), promoting their stability. The sequence is that of Ubiquitin carboxyl-terminal hydrolase 16 from Macaca fascicularis (Crab-eating macaque).